The chain runs to 537 residues: Tyrosine-protein kinase Fyn (537 aa).

Residue glycine 2 is the site of N-myristoyl glycine attachment. 2 S-palmitoyl cysteine lipidation sites follow: cysteine 3 and cysteine 6. Phosphothreonine; by PKC is present on threonine 12. The SH3 domain occupies 82-143; it reads TGVTLFVALY…PSNYVAPVDS (62 aa). An SH2 domain is found at 149-246; the sequence is WYFGKLGRKD…GLCCRLVVPC (98 aa). The 254-residue stretch at 271–524 folds into the Protein kinase domain; it reads LQLIKRLGNG…YLQAFLEDYF (254 aa). Residues 277–285 and lysine 299 each bind ATP; that span reads LGNGQFGEV. Catalysis depends on aspartate 390, which acts as the Proton acceptor. The residue at position 420 (tyrosine 420) is a Phosphotyrosine; by autocatalysis. At tyrosine 531 the chain carries Phosphotyrosine.

Belongs to the protein kinase superfamily. Tyr protein kinase family. SRC subfamily. As to quaternary structure, associates through its SH3 domain, to the p85 subunit of phosphatidylinositol 3-kinase. Mn(2+) serves as cofactor.

It carries out the reaction L-tyrosyl-[protein] + ATP = O-phospho-L-tyrosyl-[protein] + ADP + H(+). Inhibited by phosphorylation of Tyr-531 by leukocyte common antigen and activated by dephosphorylation of this site. Functionally, tyrosine-protein kinase implicated in the control of cell growth. Plays a role in the regulation of intracellular calcium levels. Required in brain development and mature brain function with important roles in the regulation of axon growth, axon guidance, and neurite extension. The protein is Tyrosine-protein kinase Fyn (fyn) of Xiphophorus hellerii (Green swordtail).